A 263-amino-acid chain; its full sequence is MPNNDYLTIYGEQIKSRLLIGSALYPSPAVMNESIVASGAEIVTVSLRRQQSAAAGDDFWQLIKNTGLKILPNTAGCHSVKEAITLAKMCREVFATDWIKLELIGDDYNLQPDPFALLEATKILIDDGFKVLPYCTDDLVLCQRLNALGCEVLMPWGAPIGTGKGLLNSYNLKTIRERLPEATLIVDAGLGLPSHACQALELGYDAVLLNSAIAGAGCPITMSRAFKAAVEAGRFAYNAKAMPEKDVAAPSTPTMGMPFWHQE.

Lys100 serves as the catalytic Schiff-base intermediate with DXP. Residues Gly161, Ala188–Gly189, and Asn210–Ser211 each bind 1-deoxy-D-xylulose 5-phosphate.

The protein belongs to the ThiG family. Homotetramer. Forms heterodimers with either ThiH or ThiS.

It is found in the cytoplasm. The catalysed reaction is [ThiS sulfur-carrier protein]-C-terminal-Gly-aminoethanethioate + 2-iminoacetate + 1-deoxy-D-xylulose 5-phosphate = [ThiS sulfur-carrier protein]-C-terminal Gly-Gly + 2-[(2R,5Z)-2-carboxy-4-methylthiazol-5(2H)-ylidene]ethyl phosphate + 2 H2O + H(+). It participates in cofactor biosynthesis; thiamine diphosphate biosynthesis. In terms of biological role, catalyzes the rearrangement of 1-deoxy-D-xylulose 5-phosphate (DXP) to produce the thiazole phosphate moiety of thiamine. Sulfur is provided by the thiocarboxylate moiety of the carrier protein ThiS. In vitro, sulfur can be provided by H(2)S. This chain is Thiazole synthase, found in Pseudoalteromonas translucida (strain TAC 125).